Consider the following 190-residue polypeptide: Peptidyl-tRNA hydrolase (190 aa).

Y14 is a binding site for tRNA. The Proton acceptor role is filled by H19. Residues Y64, N66, and N113 each coordinate tRNA.

The protein belongs to the PTH family. In terms of assembly, monomer.

Its subcellular location is the cytoplasm. The catalysed reaction is an N-acyl-L-alpha-aminoacyl-tRNA + H2O = an N-acyl-L-amino acid + a tRNA + H(+). In terms of biological role, hydrolyzes ribosome-free peptidyl-tRNAs (with 1 or more amino acids incorporated), which drop off the ribosome during protein synthesis, or as a result of ribosome stalling. Functionally, catalyzes the release of premature peptidyl moieties from peptidyl-tRNA molecules trapped in stalled 50S ribosomal subunits, and thus maintains levels of free tRNAs and 50S ribosomes. The polypeptide is Peptidyl-tRNA hydrolase (Gemmatimonas aurantiaca (strain DSM 14586 / JCM 11422 / NBRC 100505 / T-27)).